Reading from the N-terminus, the 344-residue chain is Melanocyte-stimulating hormone receptor (344 aa).

Topologically, residues 1-37 are extracellular; the sequence is MPMQGAQRKLLGSLNSTPTATSNLGLAANHTGAPCLE. An N-linked (GlcNAc...) asparagine glycan is attached at asparagine 29. A helical membrane pass occupies residues 38 to 63; the sequence is VSIPDGLFLSLGLVSLVENVLVVAAI. Residues 64 to 72 lie on the Cytoplasmic side of the membrane; it reads AKNRNLHSS. A helical transmembrane segment spans residues 73-93; that stretch reads MYCFICCLALSDLLVSGSNML. At 94–118 the chain is on the extracellular side; that stretch reads ETAIILLLEAGTLATRASVVQQLHN. A helical transmembrane segment spans residues 119–140; that stretch reads TIDVLTCSSMLCSLCFLGAIAV. Residues 141–163 are Cytoplasmic-facing; sequence DRYISIFYALRYHSIMTLPRAQR. Residues 164 to 183 traverse the membrane as a helical segment; that stretch reads AIAAIWVTSVLSSTLFITYY. Over 184 to 191 the chain is Extracellular; the sequence is DHAAVLLC. The chain crosses the membrane as a helical span at residues 192–211; the sequence is LVVFFLAMLVLMAVLYVHML. The Cytoplasmic portion of the chain corresponds to 212 to 240; sequence ARACQHAQGIIRLHNRQLPAHKGFGLRGA. Residues 241–266 form a helical membrane-spanning segment; the sequence is ATLTILLGIFFLCWGPFFLHLTLVVF. The Extracellular portion of the chain corresponds to 267–279; it reads CPQHLTCNCIFKN. Residues 280–300 traverse the membrane as a helical segment; that stretch reads FKVFLTLIICNTIIDPLIYAF. The Cytoplasmic portion of the chain corresponds to 301-344; that stretch reads RSQELRRTLKEVLLCSWWPGCGAEGGGDSVWPGSCVTLRGPLPP. Cysteine 315 is lipidated: S-palmitoyl cysteine.

The protein belongs to the G-protein coupled receptor 1 family. As to quaternary structure, interacts with MGRN1, but does not undergo MGRN1-mediated ubiquitination; this interaction competes with GNAS-binding and thus inhibits agonist-induced cAMP production. Interacts with OPN3; the interaction results in a decrease in MC1R-mediated cAMP signaling and ultimately a decrease in melanin production in melanocytes.

It is found in the cell membrane. In terms of biological role, receptor for MSH (alpha, beta and gamma) and ACTH. The activity of this receptor is mediated by G proteins which activate adenylate cyclase. Mediates melanogenesis, the production of eumelanin (black/brown) and phaeomelanin (red/yellow), via regulation of cAMP signaling in melanocytes. The chain is Melanocyte-stimulating hormone receptor (MC1R) from Mico argentatus (Silvery marmoset).